Consider the following 105-residue polypeptide: Probable guanidinium efflux system subunit GdnD (105 aa).

A run of 4 helical transmembrane segments spans residues 1–21 (MLHW…VALM), 32–52 (WVLL…YAME), 59–79 (AYAV…ILFY), and 85–105 (AKRI…KILS).

Belongs to the drug/metabolite transporter (DMT) superfamily. Small multidrug resistance (SMR) (TC 2.A.7.1) family. YkkC/YkkD subfamily. The efflux pump is composed of GdnC and GdnD.

It is found in the cell membrane. Functionally, probably involved in guanidinium transport. In vitro, confers resistance to a broad range of toxic compounds such as cationic dyes, neutral and anionic antimicrobials. This is Probable guanidinium efflux system subunit GdnD from Bacillus subtilis (strain 168).